We begin with the raw amino-acid sequence, 72 residues long: MMSRLLVFLMLGAAFMLVVSANDAYGDEPAFKDLNQGDESLGKRKSCCPCWLRGNCFWGQNCYPEGCSGPKV.

The first 21 residues, 1–21 (MMSRLLVFLMLGAAFMLVVSA), serve as a signal peptide directing secretion. A propeptide spanning residues 22-42 (NDAYGDEPAFKDLNQGDESLG) is cleaved from the precursor. Intrachain disulfides connect Cys47/Cys62, Cys48/Cys56, and Cys50/Cys67.

This sequence belongs to the sea anemone short toxin (type III) family.

It is found in the secreted. Its subcellular location is the nematocyst. Voltage-gated sodium channel (Nav) inhibitor. 1 uM completely inhibits insect voltage-gated sodium channel inactivation (DmNav1 from D.melanogaster). The polypeptide is Delta-actitoxin-Avd2b 3 (Anemonia viridis (Snakelocks anemone)).